Consider the following 103-residue polypeptide: N(4)-acetylcytidine amidohydrolase (103 aa).

One can recognise an ASCH domain in the interval Ile-6–Lys-101. Lys-21 acts as the Proton acceptor in catalysis. Thr-24 serves as the catalytic Nucleophile. The Proton donor role is filled by Glu-74.

The protein belongs to the N(4)-acetylcytidine amidohydrolase family.

It catalyses the reaction N(4)-acetylcytidine + H2O = cytidine + acetate + H(+). It carries out the reaction N(4)-acetyl-2'-deoxycytidine + H2O = 2'-deoxycytidine + acetate + H(+). The enzyme catalyses N(4)-acetylcytosine + H2O = cytosine + acetate + H(+). Its function is as follows. Catalyzes the hydrolysis of N(4)-acetylcytidine (ac4C). The protein is N(4)-acetylcytidine amidohydrolase (yqfB) of Escherichia coli (strain SE11).